The sequence spans 326 residues: Biotin synthase (326 aa).

The Radical SAM core domain occupies 40-264 (GQVQACTLVS…VLPRSYVRLA (225 aa)). [4Fe-4S] cluster is bound by residues Cys55, Cys59, and Cys62. Residues Cys99, Cys130, Cys190, and Arg262 each coordinate [2Fe-2S] cluster.

The protein belongs to the radical SAM superfamily. Biotin synthase family. As to quaternary structure, homodimer. [4Fe-4S] cluster is required as a cofactor. The cofactor is [2Fe-2S] cluster.

It carries out the reaction (4R,5S)-dethiobiotin + (sulfur carrier)-SH + 2 reduced [2Fe-2S]-[ferredoxin] + 2 S-adenosyl-L-methionine = (sulfur carrier)-H + biotin + 2 5'-deoxyadenosine + 2 L-methionine + 2 oxidized [2Fe-2S]-[ferredoxin]. It participates in cofactor biosynthesis; biotin biosynthesis; biotin from 7,8-diaminononanoate: step 2/2. Catalyzes the conversion of dethiobiotin (DTB) to biotin by the insertion of a sulfur atom into dethiobiotin via a radical-based mechanism. This is Biotin synthase from Halorhodospira halophila (strain DSM 244 / SL1) (Ectothiorhodospira halophila (strain DSM 244 / SL1)).